Here is a 219-residue protein sequence, read N- to C-terminus: Large ribosomal subunit protein bL25 (219 aa).

Residues 176–219 (VTVVPPTDEPSEEEVEAMEGESATEEPEVVDEDKEDDEEENKED) are disordered. The span at 184–219 (EPSEEEVEAMEGESATEEPEVVDEDKEDDEEENKED) shows a compositional bias: acidic residues.

It belongs to the bacterial ribosomal protein bL25 family. CTC subfamily. As to quaternary structure, part of the 50S ribosomal subunit; part of the 5S rRNA/L5/L18/L25 subcomplex. Contacts the 5S rRNA. Binds to the 5S rRNA independently of L5 and L18.

Functionally, this is one of the proteins that binds to the 5S RNA in the ribosome where it forms part of the central protuberance. The protein is Large ribosomal subunit protein bL25 of Staphylococcus epidermidis (strain ATCC 12228 / FDA PCI 1200).